We begin with the raw amino-acid sequence, 228 residues long: Octanoyltransferase (228 aa).

The BPL/LPL catalytic domain occupies 31–212 (EETDGILILL…KFEEVFEIKF (182 aa)). Residues 76–83 (RGGKITFH), 143–145 (AIG), and 156–158 (GIA) contribute to the substrate site. Catalysis depends on C174, which acts as the Acyl-thioester intermediate.

This sequence belongs to the LipB family.

The protein localises to the cytoplasm. It carries out the reaction octanoyl-[ACP] + L-lysyl-[protein] = N(6)-octanoyl-L-lysyl-[protein] + holo-[ACP] + H(+). It participates in protein modification; protein lipoylation via endogenous pathway; protein N(6)-(lipoyl)lysine from octanoyl-[acyl-carrier-protein]: step 1/2. In terms of biological role, catalyzes the transfer of endogenously produced octanoic acid from octanoyl-acyl-carrier-protein onto the lipoyl domains of lipoate-dependent enzymes. Lipoyl-ACP can also act as a substrate although octanoyl-ACP is likely to be the physiological substrate. The sequence is that of Octanoyltransferase from Caldanaerobacter subterraneus subsp. tengcongensis (strain DSM 15242 / JCM 11007 / NBRC 100824 / MB4) (Thermoanaerobacter tengcongensis).